Here is a 393-residue protein sequence, read N- to C-terminus: Probable acetyl-CoA acyltransferase (393 aa).

C88 acts as the Acyl-thioester intermediate in catalysis. Catalysis depends on proton acceptor residues H349 and C378.

This sequence belongs to the thiolase-like superfamily. Thiolase family.

The protein resides in the cytoplasm. It carries out the reaction 2 acetyl-CoA = acetoacetyl-CoA + CoA. The polypeptide is Probable acetyl-CoA acyltransferase (Staphylococcus aureus (strain MSSA476)).